We begin with the raw amino-acid sequence, 466 residues long: Ribulose bisphosphate carboxylase large chain (466 aa).

Lys-4 bears the N6,N6,N6-trimethyllysine mark. Residues Asn-113 and Thr-163 each contribute to the substrate site. Lys-165 serves as the catalytic Proton acceptor. Lys-167 contributes to the substrate binding site. Positions 191, 193, and 194 each coordinate Mg(2+). Lys-191 carries the post-translational modification N6-carboxylysine. The Proton acceptor role is filled by His-284. Substrate is bound by residues Arg-285, His-317, and Ser-369.

Belongs to the RuBisCO large chain family. Type I subfamily. Heterohexadecamer of 8 large chains and 8 small chains; disulfide-linked. The disulfide link is formed within the large subunit homodimers. Requires Mg(2+) as cofactor. The disulfide bond which can form in the large chain dimeric partners within the hexadecamer appears to be associated with oxidative stress and protein turnover.

The protein localises to the plastid. It localises to the chloroplast. The enzyme catalyses 2 (2R)-3-phosphoglycerate + 2 H(+) = D-ribulose 1,5-bisphosphate + CO2 + H2O. It catalyses the reaction D-ribulose 1,5-bisphosphate + O2 = 2-phosphoglycolate + (2R)-3-phosphoglycerate + 2 H(+). Functionally, ruBisCO catalyzes two reactions: the carboxylation of D-ribulose 1,5-bisphosphate, the primary event in carbon dioxide fixation, as well as the oxidative fragmentation of the pentose substrate in the photorespiration process. Both reactions occur simultaneously and in competition at the same active site. The chain is Ribulose bisphosphate carboxylase large chain from Pinguicula caerulea (Blueflower butterwort).